The sequence spans 655 residues: Threonine--tRNA ligase (655 aa).

Residues 1-66 (MIDLVFPDGS…TGERKFEILT (66 aa)) form the TGS domain. The segment at 248–540 (DHRKLGKTMD…LLENFAGALP (293 aa)) is catalytic. 3 residues coordinate Zn(2+): Cys-340, His-391, and His-517.

It belongs to the class-II aminoacyl-tRNA synthetase family. As to quaternary structure, homodimer. It depends on Zn(2+) as a cofactor.

It is found in the cytoplasm. The enzyme catalyses tRNA(Thr) + L-threonine + ATP = L-threonyl-tRNA(Thr) + AMP + diphosphate + H(+). Functionally, catalyzes the attachment of threonine to tRNA(Thr) in a two-step reaction: L-threonine is first activated by ATP to form Thr-AMP and then transferred to the acceptor end of tRNA(Thr). Also edits incorrectly charged L-seryl-tRNA(Thr). This Caulobacter vibrioides (strain ATCC 19089 / CIP 103742 / CB 15) (Caulobacter crescentus) protein is Threonine--tRNA ligase.